The sequence spans 723 residues: MDATSKPAGKCPVMHGGNTASGKSVTEWWPNALNLDILHQHDTKTNPLGTSFNYREALKTLDVEALKADLRALMTDSQEWWPADWGSYVGMMARVTWHAAGSYRVTDGRGGANTGNQRFAPLNSWPDNVNTDKGRRLLWPIKKKYGNKISWADLIALAGTIAYDVAGLKTFGFAFGREDIWAPEKDTYWGDEKEWLAPSDGRYGDVSKPETLENPLAAVQMGLIYVNPEGVNGKSDPLATAAQMRETFARMGMDDEETVALTAGGHTIGKSHGNGSAANLSPDPEAAGPEYQGLGWINTKGRGIGRDTVVSGIEGAWTSEPTKWDNGFFDMLFKHEWTLTHSPAGASQWAPITIAEEDKPVDVEDASIRTIPMMTDADMALKVDPIYREISLKFKDDQDHFSDVFARAWFKLTHRDMGPKSRYVGPDVPAEDLIWQDPIPAGSTSYDVAAVKAKIAASGLSVADLVSTAWDSARTFRGSDKRGGANGARIRLAPQKDWEGNEPARLSRVLSVLEPIARETGASIADVIVLAGNYGVEQAAKAAGFDIAVPFAAGRGDASAEQTDADSFAPLEPLADGFRNWVKKDYVVSPEELLLDRAQLLGLTAPELTVLIGGLRVIGANYGGAAHGVFTDKPGALTTDFFTTLTDMAYSWVPTGNNLYEIRDRKTGAARYSATRVDLVIGSNSILRAYAEVYAQDDNREKFARDFIAAWTKVMNADRFDLI.

The segment at residues 97–225 (WHAAGSYRVT…LAAVQMGLIY (129 aa)) is a cross-link (tryptophyl-tyrosyl-methioninium (Trp-Tyr) (with M-251)). Histidine 98 serves as the catalytic Proton acceptor. A cross-link (tryptophyl-tyrosyl-methioninium (Tyr-Met) (with W-97)) is located at residues 225 to 251 (YVNPEGVNGKSDPLATAAQMRETFARM). Histidine 266 contributes to the heme b binding site.

Belongs to the peroxidase family. Peroxidase/catalase subfamily. In terms of assembly, homodimer or homotetramer. The cofactor is heme b. Post-translationally, formation of the three residue Trp-Tyr-Met cross-link is important for the catalase, but not the peroxidase activity of the enzyme.

The catalysed reaction is H2O2 + AH2 = A + 2 H2O. It catalyses the reaction 2 H2O2 = O2 + 2 H2O. Its function is as follows. Bifunctional enzyme with both catalase and broad-spectrum peroxidase activity. This chain is Catalase-peroxidase, found in Agrobacterium fabrum (strain C58 / ATCC 33970) (Agrobacterium tumefaciens (strain C58)).